Reading from the N-terminus, the 290-residue chain is 4-hydroxy-tetrahydrodipicolinate synthase (290 aa).

Thr48 is a pyruvate binding site. Catalysis depends on Tyr137, which acts as the Proton donor/acceptor. The active-site Schiff-base intermediate with substrate is the Lys165. Ile206 lines the pyruvate pocket.

Belongs to the DapA family. As to quaternary structure, homotetramer; dimer of dimers.

It is found in the cytoplasm. It carries out the reaction L-aspartate 4-semialdehyde + pyruvate = (2S,4S)-4-hydroxy-2,3,4,5-tetrahydrodipicolinate + H2O + H(+). The protein operates within amino-acid biosynthesis; L-lysine biosynthesis via DAP pathway; (S)-tetrahydrodipicolinate from L-aspartate: step 3/4. Its function is as follows. Catalyzes the condensation of (S)-aspartate-beta-semialdehyde [(S)-ASA] and pyruvate to 4-hydroxy-tetrahydrodipicolinate (HTPA). This Enterococcus faecalis (strain ATCC 700802 / V583) protein is 4-hydroxy-tetrahydrodipicolinate synthase.